Reading from the N-terminus, the 538-residue chain is Atos homolog protein B (538 aa).

Polar residues-rich tracts occupy residues 1–12 (MRHVQAETSPSS) and 129–141 (GGSSTSPWTSGAR). Disordered regions lie at residues 1–98 (MRHV…EPPT), 129–185 (GGSS…QLHT), and 201–303 (LVSG…PTDC). The segment covering 227 to 238 (HTPPGPGPPGPC) has biased composition (pro residues). Phosphoserine is present on residues Ser-254 and Ser-255. The interval 348 to 430 (LLGNFEESLL…VPKVGTIQVT (83 aa)) is required for macropage invasion. A transactivation domain 1 (TAD1) region spans residues 436-444 (QTVVKMFLV).

Belongs to the ATOS family.

It is found in the nucleus. In terms of biological role, transcription regulator that may syncronize transcriptional and translational programs. This chain is Atos homolog protein B, found in Bos taurus (Bovine).